The following is a 301-amino-acid chain: NAD kinase 2 (301 aa).

Catalysis depends on aspartate 77, which acts as the Proton acceptor. NAD(+) contacts are provided by residues 77-78 (DG), arginine 82, 151-152 (NE), arginine 162, aspartate 181, and 192-197 (TAYAFS).

The protein belongs to the NAD kinase family. Requires a divalent metal cation as cofactor.

The protein resides in the cytoplasm. The catalysed reaction is NAD(+) + ATP = ADP + NADP(+) + H(+). Functionally, involved in the regulation of the intracellular balance of NAD and NADP, and is a key enzyme in the biosynthesis of NADP. Catalyzes specifically the phosphorylation on 2'-hydroxyl of the adenosine moiety of NAD to yield NADP. The protein is NAD kinase 2 of Streptomyces avermitilis (strain ATCC 31267 / DSM 46492 / JCM 5070 / NBRC 14893 / NCIMB 12804 / NRRL 8165 / MA-4680).